The primary structure comprises 275 residues: Phospholipid scramblase (275 aa).

Residues tryptophan 256–tyrosine 272 form a helical membrane-spanning segment.

Belongs to the phospholipid scramblase family. As to quaternary structure, forms homooligomers in the presence of calcium. Ca(2+) is required as a cofactor. Mg(2+) serves as cofactor.

Its subcellular location is the membrane. The protein localises to the cell membrane. The catalysed reaction is a 1,2-diacyl-sn-glycero-3-phosphoethanolamine(in) = a 1,2-diacyl-sn-glycero-3-phosphoethanolamine(out). Catalyzes calcium-induced ATP-independent rapid bidirectional and non-specific movement of phospholipids (lipid scrambling or lipid flip-flop) between the inner and outer leaflet of the plasma membrane resulting in collapse of the phospholipid asymmetry. Preferentially, mediates calcium-dependent phosphatidylethanolamine externalization. During the liver stage, plays a role in the interaction with, and thus invasion of, host hepatocytes. Dispensable for host erythrocyte invasion and asexual parasite development. This Plasmodium falciparum (isolate 3D7) protein is Phospholipid scramblase.